We begin with the raw amino-acid sequence, 152 residues long: Deoxyuridine 5'-triphosphate nucleotidohydrolase (152 aa).

Substrate-binding positions include 71–73 (RSG), N84, 88–90 (LID), and M98.

This sequence belongs to the dUTPase family. It depends on Mg(2+) as a cofactor.

The enzyme catalyses dUTP + H2O = dUMP + diphosphate + H(+). It participates in pyrimidine metabolism; dUMP biosynthesis; dUMP from dCTP (dUTP route): step 2/2. This enzyme is involved in nucleotide metabolism: it produces dUMP, the immediate precursor of thymidine nucleotides and it decreases the intracellular concentration of dUTP so that uracil cannot be incorporated into DNA. The sequence is that of Deoxyuridine 5'-triphosphate nucleotidohydrolase from Salmonella arizonae (strain ATCC BAA-731 / CDC346-86 / RSK2980).